The primary structure comprises 191 residues: Cell division protein SepF (191 aa).

The interval 1–77 (MEGQDDYQLL…MGSNVIGLPG (77 aa)) is disordered.

The protein belongs to the SepF family. As to quaternary structure, homodimer. Interacts with FtsZ.

The protein localises to the cytoplasm. Cell division protein that is part of the divisome complex and is recruited early to the Z-ring. Probably stimulates Z-ring formation, perhaps through the cross-linking of FtsZ protofilaments. Its function overlaps with FtsA. The chain is Cell division protein SepF from Synechococcus sp. (strain JA-2-3B'a(2-13)) (Cyanobacteria bacterium Yellowstone B-Prime).